The following is a 118-amino-acid chain: Myotrophin (118 aa).

ANK repeat units follow at residues 1–30 (MGDK…DVNR), 34–65 (GGRK…NAAD), and 67–98 (HGIT…NVKG).

Belongs to the myotrophin family.

Its subcellular location is the cytoplasm. The protein resides in the nucleus. It localises to the perinuclear region. Functionally, regulates NF-kappa-B transcription factor activity. Promotes growth of cardiomyocytes, but not cardiomyocyte proliferation. Promotes cardiac muscle hypertrophy. Plays a role in the regulation of the growth of actin filaments. Inhibits the activity of the F-actin-capping protein complex. The polypeptide is Myotrophin (mtpn) (Xenopus laevis (African clawed frog)).